The following is a 225-amino-acid chain: PKHD-type hydroxylase YbiX (225 aa).

In terms of domain architecture, Fe2OG dioxygenase spans threonine 78–serine 177. Fe cation is bound by residues histidine 96, aspartate 98, and histidine 158. 2-oxoglutarate is bound at residue arginine 168.

Fe(2+) serves as cofactor. Requires L-ascorbate as cofactor.

The polypeptide is PKHD-type hydroxylase YbiX (Shigella boydii serotype 18 (strain CDC 3083-94 / BS512)).